The chain runs to 339 residues: Heat-inducible transcription repressor HrcA (339 aa).

Belongs to the HrcA family.

Negative regulator of class I heat shock genes (grpE-dnaK-dnaJ and groELS operons). Prevents heat-shock induction of these operons. This is Heat-inducible transcription repressor HrcA from Frankia casuarinae (strain DSM 45818 / CECT 9043 / HFP020203 / CcI3).